The primary structure comprises 40 residues: Light-harvesting protein B800/830/1020 beta-1 chain (40 aa).

At 1–20 the chain is on the cytoplasmic side; it reads ANDIRPLRDFEDEEAQEFHQ. A bacteriochlorophyll-binding residues include H19 and H37. The helical transmembrane segment at 21-40 threads the bilayer; sequence AAVQAFFLYVAVAFVAHLPV.

Belongs to the antenna complex beta subunit family. As to quaternary structure, the core complex is formed by different alpha and beta chains, binding bacteriochlorophyll molecules, and arranged most probably in tetrameric structures disposed around the reaction center. The non-pigmented gamma chains may constitute additional components.

It localises to the cell inner membrane. In terms of biological role, antenna complexes are light-harvesting systems, which transfer the excitation energy to the reaction centers. In Halorhodospira halochloris (Ectothiorhodospira halochloris), this protein is Light-harvesting protein B800/830/1020 beta-1 chain.